The primary structure comprises 118 residues: UPF0102 protein Franean1_1156 (118 aa).

The protein belongs to the UPF0102 family.

The sequence is that of UPF0102 protein Franean1_1156 from Parafrankia sp. (strain EAN1pec).